The sequence spans 644 residues: Anti-sigma-I factor RsgI3 (644 aa).

Over 1–56 the chain is Cytoplasmic; it reads MDNIGVIIKIEGNEAIVMTDDCSFKKVPIKDGMHPGQKILVPNNEVIQKENKSIKR. One can recognise a RsgI N-terminal anti-sigma domain in the interval 3–50; sequence NIGVIIKIEGNEAIVMTDDCSFKKVPIKDGMHPGQKILVPNNEVIQKE. Residues 57–77 traverse the membrane as a helical segment; the sequence is ISAVATGIAAVFLMVLSLIWI. At 78–644 the chain is on the extracellular side; that stretch reads NKPGRPDGIY…VVPSKNLFAD (567 aa). The span at 302 to 328 shows a compositional bias: polar residues; that stretch reads PTNTPSISTKPSATPAENPTPKLTQKP. Residues 302-359 form a disordered region; sequence PTNTPSISTKPSATPAENPTPKLTQKPTPVPAKTGERTSTTPTPTPAPTVRNGTGSGL. PA14 domains lie at 354–491 and 502–640; these read GTGS…PSSQ and KDVN…PSKN.

Interacts (via RsgI N-terminal anti-sigma domain) with SigI3.

The protein localises to the cell membrane. Its function is as follows. Anti-sigma factor for SigI3. Negatively regulates SigI3 activity through direct interaction. Binding of the polysaccharide substrate to the extracellular C-terminal sensing domain of RsgI3 may induce a conformational change in its N-terminal cytoplasmic region, leading to the release and activation of SigI3. In Acetivibrio thermocellus (strain ATCC 27405 / DSM 1237 / JCM 9322 / NBRC 103400 / NCIMB 10682 / NRRL B-4536 / VPI 7372) (Clostridium thermocellum), this protein is Anti-sigma-I factor RsgI3.